A 207-amino-acid chain; its full sequence is Ribosomal RNA large subunit methyltransferase E (207 aa).

Residues Gly-60, Trp-62, Asp-80, Asp-96, and Asp-121 each coordinate S-adenosyl-L-methionine. Lys-161 functions as the Proton acceptor in the catalytic mechanism.

This sequence belongs to the class I-like SAM-binding methyltransferase superfamily. RNA methyltransferase RlmE family.

It is found in the cytoplasm. The catalysed reaction is uridine(2552) in 23S rRNA + S-adenosyl-L-methionine = 2'-O-methyluridine(2552) in 23S rRNA + S-adenosyl-L-homocysteine + H(+). Functionally, specifically methylates the uridine in position 2552 of 23S rRNA at the 2'-O position of the ribose in the fully assembled 50S ribosomal subunit. This is Ribosomal RNA large subunit methyltransferase E from Pseudomonas aeruginosa (strain UCBPP-PA14).